Reading from the N-terminus, the 1388-residue chain is Dicer-like protein 2 (1388 aa).

Residues 23-203 (MLEASMKENI…LLTVESNLDA (181 aa)) enclose the Helicase ATP-binding domain. 36-43 (MDTGSGKT) provides a ligand contact to ATP. Positions 144-147 (DEAH) match the DEAH box motif. The Helicase C-terminal domain maps to 371–537 (SLLNFLDSLD…DDERQLQSVS (167 aa)). Positions 564 to 658 (AMAHLHHFCA…LPLTKRPELK (95 aa)) constitute a Dicer dsRNA-binding fold domain. 2 RNase III domains span residues 919–1059 (ATRL…MDGG) and 1098–1281 (NERL…VDSG). Positions 1137, 1267, and 1270 each coordinate Mg(2+).

Belongs to the helicase family. Dicer subfamily. The cofactor is Mg(2+). Mn(2+) is required as a cofactor.

Dicer-like endonuclease involved in cleaving double-stranded RNA in the RNA interference (RNAi) pathway. Produces 21 to 25 bp dsRNAs (siRNAs) which target the selective destruction of homologous RNAs leading to sequence-specific suppression of gene expression, called post-transcriptional gene silencing (PTGS). Part of a broad host defense response against viral infection and transposons. The polypeptide is Dicer-like protein 2 (dcl2) (Neosartorya fischeri (strain ATCC 1020 / DSM 3700 / CBS 544.65 / FGSC A1164 / JCM 1740 / NRRL 181 / WB 181) (Aspergillus fischerianus)).